An 83-amino-acid chain; its full sequence is Small ribosomal subunit protein eS21 (83 aa).

Position 1 is an N-acetylmethionine (Met-1). Lys-81 is modified (N6-acetyllysine).

Belongs to the eukaryotic ribosomal protein eS21 family. Component of the 40S small ribosomal subunit.

The protein localises to the cytoplasm. It is found in the cytosol. The protein resides in the rough endoplasmic reticulum. In terms of biological role, component of the small ribosomal subunit. The ribosome is a large ribonucleoprotein complex responsible for the synthesis of proteins in the cell. The protein is Small ribosomal subunit protein eS21 (Rps21) of Mus musculus (Mouse).